Here is an 859-residue protein sequence, read N- to C-terminus: Active breakpoint cluster region-related protein (859 aa).

Positions 31-84 (AEGHEEQKGPPEGSETMPYIDESPTMSPQLSARSQGGGESISPTPPEGLAPGVE) are disordered. A compositionally biased stretch (polar residues) spans 54–64 (PTMSPQLSARS). Ser57 carries the post-translational modification Phosphoserine. Positions 91 to 284 (MRKLVLSGFL…QNFLSSINED (194 aa)) constitute a DH domain. The PH domain occupies 301–459 (QLVKDGFLVE…WREAIQKLQK (159 aa)). A C2 domain is found at 484-613 (TVHNIPVTSN…ESKNWHTDVI (130 aa)). A Rho-GAP domain is found at 647–845 (VKISVVTKRE…YYLQHPPISF (199 aa)).

Interacts with DLG4. As to expression, expressed in brain, including the cortex, hippocampus, cerebellum, and brainstem, as well as the spinal cord (at protein level).

The protein resides in the cell projection. It localises to the dendritic spine. The protein localises to the axon. It is found in the synapse. Functionally, protein with a unique structure having two opposing regulatory activities toward small GTP-binding proteins. The C-terminus is a GTPase-activating protein domain which stimulates GTP hydrolysis by RAC1, RAC2 and CDC42. Accelerates the intrinsic rate of GTP hydrolysis of RAC1 or CDC42, leading to down-regulation of the active GTP-bound form. The central Dbl homology (DH) domain functions as guanine nucleotide exchange factor (GEF) that modulates the GTPases CDC42, RHOA and RAC1. Promotes the conversion of CDC42, RHOA and RAC1 from the GDP-bound to the GTP-bound form. Functions as an important negative regulator of neuronal RAC1 activity. Regulates macrophage functions such as CSF-1 directed motility and phagocytosis through the modulation of RAC1 activity. This is Active breakpoint cluster region-related protein from Rattus norvegicus (Rat).